We begin with the raw amino-acid sequence, 323 residues long: Germacrene A synthase (323 aa).

Mg(2+) is bound by residues Asp-82, Asp-86, Asn-222, Ser-226, and Glu-230. Positions 82 to 86 match the DDXXD motif motif; sequence DDQCD.

This sequence belongs to the terpene synthase family. Mg(2+) is required as a cofactor.

It carries out the reaction (2E,6E)-farnesyl diphosphate = 5-epi-alpha-selinene + diphosphate. In terms of biological role, catalyzes the cyclization of farnesyl diphosphate (FPP) to the sesquiterpene germacrene A. This Nostoc punctiforme (strain ATCC 29133 / PCC 73102) protein is Germacrene A synthase.